We begin with the raw amino-acid sequence, 319 residues long: Ferrochelatase (319 aa).

Residues His192 and Glu271 each contribute to the Fe cation site.

Belongs to the ferrochelatase family.

The protein localises to the cytoplasm. The catalysed reaction is heme b + 2 H(+) = protoporphyrin IX + Fe(2+). Its pathway is porphyrin-containing compound metabolism; protoheme biosynthesis; protoheme from protoporphyrin-IX: step 1/1. Functionally, catalyzes the ferrous insertion into protoporphyrin IX. This chain is Ferrochelatase, found in Geotalea daltonii (strain DSM 22248 / JCM 15807 / FRC-32) (Geobacter daltonii).